The primary structure comprises 247 residues: tRNA (guanine-N(7)-)-methyltransferase (247 aa).

S-adenosyl-L-methionine-binding positions include Gly-70, Glu-93–Ile-94, Asn-128–Ala-129, and Leu-148. The active site involves Asp-151. Ser-226–Glu-228 contacts S-adenosyl-L-methionine.

The protein belongs to the class I-like SAM-binding methyltransferase superfamily. TrmB family.

The protein resides in the nucleus. It carries out the reaction guanosine(46) in tRNA + S-adenosyl-L-methionine = N(7)-methylguanosine(46) in tRNA + S-adenosyl-L-homocysteine. Its pathway is tRNA modification; N(7)-methylguanine-tRNA biosynthesis. In terms of biological role, catalyzes the formation of N(7)-methylguanine at position 46 (m7G46) in tRNA. This chain is tRNA (guanine-N(7)-)-methyltransferase, found in Drosophila virilis (Fruit fly).